Here is a 627-residue protein sequence, read N- to C-terminus: Zinc finger MYM-type protein 5 (627 aa).

Residues 1 to 23 (MEAHLADMESSGGPTSSLAGTSR) are disordered. Over residues 12-23 (GGPTSSLAGTSR) the composition is skewed to polar residues. A Glycyl lysine isopeptide (Lys-Gly) (interchain with G-Cter in SUMO2) cross-link involves residue Lys-59. Positions 91–123 (DDEGDTDTNGGEEKNPTDFIEWGPNGNKSSTKN) are disordered. Glycyl lysine isopeptide (Lys-Gly) (interchain with G-Cter in SUMO2) cross-links involve residues Lys-137 and Lys-195. Residues 234–268 (HLFCSTTCLSSFSHKRTRKTRNVMCKKDSPVRTTT) form an MYM-type 1 zinc finger. The MYM-type 2; degenerate zinc-finger motif lies at 280-319 (QGFYNASLSPYENCQSLRKEVFTKSRCIICNKLGEVRHEI). MYM-type zinc fingers lie at residues 326-354 (HKLCSNNCFNEYRLTNGLIMNCCEQCSKY) and 370-396 (KRFCCQNCADEYKEIMEAKSKLLLLQN). The disordered stretch occupies residues 405–429 (ENEKRLRESSGTLSGNTGDIPEKKE). Glycyl lysine isopeptide (Lys-Gly) (interchain with G-Cter in SUMO2) cross-links involve residues Lys-408, Lys-427, and Lys-517.

Interacts (via N-terminal 120 amino acid region) with ETV5 (via C-terminal).

The protein resides in the nucleus. Its function is as follows. Functions as a transcriptional regulator. The protein is Zinc finger MYM-type protein 5 (Zmym5) of Mus musculus (Mouse).